Consider the following 84-residue polypeptide: Small ribosomal subunit protein bS16 (84 aa).

It belongs to the bacterial ribosomal protein bS16 family.

This chain is Small ribosomal subunit protein bS16, found in Burkholderia multivorans (strain ATCC 17616 / 249).